We begin with the raw amino-acid sequence, 284 residues long: Efem/EfeO family lipoprotein (284 aa).

The signal sequence occupies residues 1–17 (MKKLTTLLLASTLLIAA). Residue cysteine 18 is the site of N-palmitoyl cysteine attachment. Cysteine 18 carries the S-diacylglycerol cysteine lipid modification.

It belongs to the EfeM/EfeO family.

Its subcellular location is the cell membrane. The chain is Efem/EfeO family lipoprotein from Staphylococcus aureus (strain MSSA476).